A 56-amino-acid chain; its full sequence is MKAIVVLLILALILCLYAMTTVEGACQFWSCNSSCISRGYRQGYCWGIQYKYCQCQ.

Residues 1 to 24 (MKAIVVLLILALILCLYAMTTVEG) form the signal peptide. Intrachain disulfides connect Cys26-Cys45, Cys31-Cys53, and Cys35-Cys55.

It localises to the secreted. In terms of biological role, antibacterial protein involved in the immune response to septic injury. When combined with 14.026 kDa and 14.059 kDa hemolymph antimicrobial peptides, it has a strong cooperative activity against the Gram-positive bacteria B.subtilis and S.aureus, and against the Gram-negative bacteria E.coli DH5-alpha and K.pneumoniae ATCC 138833. Does not show detectable antibacterial activity when present alone. Has no hemolytic activity in human erythrocytes. The protein is Defensin-1 of Centruroides limpidus (Mexican scorpion).